The chain runs to 416 residues: Putative competence-damage inducible protein (416 aa).

This sequence belongs to the CinA family.

The sequence is that of Putative competence-damage inducible protein from Geobacillus sp. (strain WCH70).